We begin with the raw amino-acid sequence, 177 residues long: Superoxide dismutase [Cu-Zn] 1 (177 aa).

A signal peptide spans Met-1–Ala-20. Residues His-69, His-71, and His-94 each contribute to the Cu cation site. Cys-76 and Cys-172 are joined by a disulfide. His-94, His-103, His-112, and Asp-115 together coordinate Zn(2+). His-150 serves as a coordination point for Cu cation.

This sequence belongs to the Cu-Zn superoxide dismutase family. As to quaternary structure, monomer. It depends on Cu cation as a cofactor. Zn(2+) is required as a cofactor.

The protein resides in the periplasm. The enzyme catalyses 2 superoxide + 2 H(+) = H2O2 + O2. Destroys radicals which are normally produced within the cells and which are toxic to biological systems. The chain is Superoxide dismutase [Cu-Zn] 1 (sodC1) from Salmonella typhimurium (strain 4/74).